The sequence spans 161 residues: Nucleotide-binding protein Swoo_3646 (161 aa).

This sequence belongs to the YajQ family.

Its function is as follows. Nucleotide-binding protein. This is Nucleotide-binding protein Swoo_3646 from Shewanella woodyi (strain ATCC 51908 / MS32).